The following is a 381-amino-acid chain: N-acetylglucosamine-6-phosphate deacetylase (381 aa).

E129 lines the a divalent metal cation pocket. 140–141 (VH) provides a ligand contact to substrate. 2 residues coordinate a divalent metal cation: H193 and H214. Substrate-binding positions include 217-218 (NA), R226, and 246-249 (DGVH). D271 (proton donor/acceptor) is an active-site residue. 306 to 308 (IAG) serves as a coordination point for substrate.

It belongs to the metallo-dependent hydrolases superfamily. NagA family. Homotetramer. It depends on a divalent metal cation as a cofactor.

The catalysed reaction is N-acetyl-D-glucosamine 6-phosphate + H2O = D-glucosamine 6-phosphate + acetate. It functions in the pathway amino-sugar metabolism; N-acetylneuraminate degradation; D-fructose 6-phosphate from N-acetylneuraminate: step 4/5. Functionally, involved in the first committed step in the biosynthesis of amino-sugar-nucleotides. Catalyzes the hydrolysis of the N-acetyl group of N-acetylglucosamine-6-phosphate (GlcNAc-6-P) to yield glucosamine 6-phosphate and acetate. This Haemophilus influenzae (strain ATCC 51907 / DSM 11121 / KW20 / Rd) protein is N-acetylglucosamine-6-phosphate deacetylase (nagA).